Reading from the N-terminus, the 317-residue chain is NF-kappa-B inhibitor alpha (317 aa).

The segment at 1–39 (MFQAAERPQEWAMEGPRDGLKKERLLDDRHDSGLDSMKD) is disordered. The segment covering 15 to 39 (GPRDGLKKERLLDDRHDSGLDSMKD) has biased composition (basic and acidic residues). Lys21 is covalently cross-linked (Glycyl lysine isopeptide (Lys-Gly) (interchain with G-Cter in SUMO); alternate). Lys21 participates in a covalent cross-link: Glycyl lysine isopeptide (Lys-Gly) (interchain with G-Cter in ubiquitin); alternate. Lys22 participates in a covalent cross-link: Glycyl lysine isopeptide (Lys-Gly) (interchain with G-Cter in ubiquitin). The Destruction motif motif lies at 30 to 36 (HDSGLDS). Ser32 is modified (phosphoserine; by IKKA and IKKE). Residue Ser36 is modified to Phosphoserine; by IKKA, IKKB, IKKE and TBK1. Phosphotyrosine; by Tyr-kinases is present on Tyr42. Residues 45–54 (MVKELQEIRL) carry the Nuclear export signal motif. ANK repeat units lie at residues 73 to 103 (DGDS…DLAF), 110 to 139 (LQQT…DPEL), 143 to 172 (RGNT…TPHL), 182 to 211 (NGHT…DVNA), and 216 to 245 (NGRT…DVNR). Positions 110–120 (LQQTPLHLAVI) match the Nuclear import signal motif. (3S)-3-hydroxyasparagine; by HIF1AN; partial is present on residues Asn210 and Asn244. Phosphoserine; by CK2 occurs at positions 283 and 288. Phosphothreonine; by CK2 is present on Thr291. A Phosphoserine; by CK2 modification is found at Ser293. Thr299 carries the post-translational modification Phosphothreonine; by CK2.

It belongs to the NF-kappa-B inhibitor family. As to quaternary structure, interacts with RELA; the interaction requires the nuclear import signal. Part of a 70-90 kDa complex at least consisting of CHUK, IKBKB, NFKBIA, RELA, ELP1 and MAP3K14. Interacts with NKIRAS1 and NKIRAS2. Interacts with isoform 1 and isoform 2 of RWDD3; the interaction enhances sumoylation. Interacts with PRMT2. Interacts with PRKACA in platelets; this interaction is disrupted by thrombin and collagen. Interacts with MEFV. Interacts with DDRGK1; positively regulates NFKBIA phosphorylation and degradation. Interacts with HNRNPA2B1; the interaction may be mediated by the RRM2 domain of HNRNPA2B1, and HNRNPA2B1 may interact simultaneously with FAM76B and either NFKBIA or NFKBIE to form a complex. (Microbial infection) Interacts with HBV protein X. In terms of processing, phosphorylated at Ser-32 and Ser-36 by IKKA/CHUK and IKKB/IKBKB; disables inhibition of NF-kappa-B DNA-binding activity. Phosphorylation at positions 32 and 36 is prerequisite to recognition by the SCF(FBXW11) and SCF(BTRC) complexes, leading to polyubiquitination and subsequent degradation. Phosphorylated at Ser-32 in response to FK506 treatment: phosphorylation is independent of IKKA/CHUK and IKKB/IKBKB and promotes NFKBIA degradation, followed by NF-kappa-B activation. Phosphorylated at Tyr-42: its effect is however unclear. According to a report, phosphorylation at Tyr-42 activates NF-kappa-B without triggering proteolytic degradation of NFKBIA. According to another publication, phosphorylation at Tyr-42 inhibits NF-kappa-B activity by preventing phosphorylation at Ser-32 and Ser-36 and subsequent ubiquitination and degradation. Post-translationally, polyubiquitinated at Lys-21 and/or Lys-22 following phosphorylation at Ser-32 and Ser-36. Monoubiquitinated at Lys-21 and/or Lys-22 by UBE2D3. Ubiquitin chain elongation is then performed by CDC34 in cooperation with the SCF(FBXW11) E3 ligase complex, building ubiquitin chains from the UBE2D3-primed NFKBIA-linked ubiquitin. The resulting polyubiquitination leads to protein degradation. Also ubiquitinated by the SCF(BTRC) complex following stimulus-dependent phosphorylation at Ser-32 and Ser-36. Deubiquitinated by USP38, leading to NF-kappa-B inhibition. Sumoylated; sumoylation requires the presence of the nuclear import signal. Sumoylation blocks ubiquitination and proteasome-mediated degradation of the protein thereby increasing the protein stability. In terms of processing, hydroxylated by HIF1AN. Post-translationally, (Microbial infection) Deubiquitinated by porcine reproductive and respiratory syndrome virus Nsp2 protein, which thereby interferes with NFKBIA degradation and impairs subsequent NF-kappa-B activation.

The protein resides in the cytoplasm. Its subcellular location is the nucleus. Functionally, inhibits the activity of dimeric NF-kappa-B/REL complexes by trapping REL (RELA/p65 and NFKB1/p50) dimers in the cytoplasm by masking their nuclear localization signals. On cellular stimulation by immune and pro-inflammatory responses, becomes phosphorylated promoting ubiquitination and degradation, enabling the dimeric RELA to translocate to the nucleus and activate transcription. In Homo sapiens (Human), this protein is NF-kappa-B inhibitor alpha (NFKBIA).